Here is a 2642-residue protein sequence, read N- to C-terminus: Fusarielin synthase FSL1 (2642 aa).

Positions 6–450 (NEPIAIIGTG…GTNAHAILEA (445 aa)) constitute a Ketosynthase family 3 (KS3) domain. Catalysis depends on for beta-ketoacyl synthase activity residues cysteine 179, histidine 318, and histidine 370. The interval 566 to 890 (VFTGQGAQWA…PYTSALVRGK (325 aa)) is malonyl-CoA:ACP transacylase (MAT) domain. Serine 659 serves as the catalytic For malonyltransferase activity. Positions 965 to 1101 (HDLLGIQTAD…GKVCIFLQTE (137 aa)) are N-terminal hotdog fold. The segment at 965–1279 (HDLLGIQTAD…SFSPFAAATD (315 aa)) is dehydratase (DH) domain. Positions 965–1280 (HDLLGIQTAD…FSPFAAATDR (316 aa)) constitute a PKS/mFAS DH domain. Residue histidine 997 is the Proton acceptor; for dehydratase activity of the active site. Residues 1126 to 1280 (MAGIDVERFY…FSPFAAATDR (155 aa)) are C-terminal hotdog fold. Aspartate 1189 functions as the Proton donor; for dehydratase activity in the catalytic mechanism. The methyltransferase (MET) domain stretch occupies residues 1423-1622 (NYLDRYYTHA…GVDTNTPMPD (200 aa)). Positions 2244-2423 (TYWMLGLTGD…GHNAAVIDIS (180 aa)) are ketoreductase (KR) domain. Residues 2556-2635 (QEVTSVLTSC…DLADYILESL (80 aa)) enclose the Carrier domain. Serine 2595 is subject to O-(pantetheine 4'-phosphoryl)serine.

The cofactor is pantetheine 4'-phosphate.

The protein operates within secondary metabolite biosynthesis. Its function is as follows. Reducing polyketide synthase; part of the gene cluster that mediates the biosynthesis of fusarielins F, G and H, decaketide compounds with 5 methylations and a decaline core that act as mycoestrogens as they stimulate growth of MCF-7 breast cancer cells. The initial compound in the pathway is produced by the reducing polyketide synthase FSL1. FSL1 lacks an active enoyl reductase (ER) domain and biosynthesis of fusarielins relies on the trans-acting enoyl reductase FSL5, before it is released through hydrolysis catalyzed by the thioesterase FSL2. Fusarielins F, G, and H have a C11=C12 cis double bond and is fully reduced between C10 and C11 and between C12 and C13. FSL3 can be involved in the formation of the C11=C12 cis double bond by moving a hypothetical C10=C11 or C12=C13 trans double bond to form prefusarielin. Prefusarielin is oxygenated at C15 and C16 by the cytochrome P450 monooxygenase FSL4, resulting in fusarielin F, which subsequently is epoxidized into fusarielin G by the same enzyme. The final step in the pathway is a reduction of the carboxylic acid moiety to yield fusarielin H via a still undetermined mechanism. In Gibberella zeae (strain ATCC MYA-4620 / CBS 123657 / FGSC 9075 / NRRL 31084 / PH-1) (Wheat head blight fungus), this protein is Fusarielin synthase FSL1.